The primary structure comprises 163 residues: Nodulin-13 (163 aa).

2 residues coordinate kinetin: Gln68 and Tyr82. Gln68 and Tyr82 together coordinate N(6)-dimethylallyladenine. Gln68, Tyr82, and Tyr133 together coordinate trans-zeatin.

This sequence belongs to the BetVI family. As to quaternary structure, homodimer. Expressed in nodules, but not in leaves, stems, flowers and roots. Specifically located in the nodule cortex.

May be involved in nodule organogenesis rather in the processes related to nitrogen fixation or interactions with the bacteria. May regulate nodulation by controlling the levels of freely available cytokinins. The polypeptide is Nodulin-13 (N13) (Medicago truncatula (Barrel medic)).